The following is a 1377-amino-acid chain: DNA-directed RNA polymerase subunit beta' (1377 aa).

Zn(2+)-binding residues include Cys60, Cys62, Cys75, and Cys78. Mg(2+) is bound by residues Asp449, Asp451, and Asp453. Zn(2+) contacts are provided by Cys777, Cys851, Cys858, and Cys861.

It belongs to the RNA polymerase beta' chain family. In terms of assembly, the RNAP catalytic core consists of 2 alpha, 1 beta, 1 beta' and 1 omega subunit. When a sigma factor is associated with the core the holoenzyme is formed, which can initiate transcription. It depends on Mg(2+) as a cofactor. Zn(2+) is required as a cofactor.

The catalysed reaction is RNA(n) + a ribonucleoside 5'-triphosphate = RNA(n+1) + diphosphate. In terms of biological role, DNA-dependent RNA polymerase catalyzes the transcription of DNA into RNA using the four ribonucleoside triphosphates as substrates. This chain is DNA-directed RNA polymerase subunit beta', found in Borrelia recurrentis (strain A1).